Reading from the N-terminus, the 200-residue chain is Ribonuclease HII (200 aa).

An RNase H type-2 domain is found at 6–200 (ESIAGVDEVG…KLFAVHGSLT (195 aa)). A divalent metal cation contacts are provided by Asp-12, Glu-13, and Asp-108.

Belongs to the RNase HII family. The cofactor is Mn(2+). Mg(2+) serves as cofactor.

It localises to the cytoplasm. The catalysed reaction is Endonucleolytic cleavage to 5'-phosphomonoester.. Functionally, endonuclease that specifically degrades the RNA of RNA-DNA hybrids. This chain is Ribonuclease HII, found in Prochlorococcus marinus (strain MIT 9303).